Here is a 272-residue protein sequence, read N- to C-terminus: MPLVDPVTMSSSAIVKGAVAQSTSTTKSTPGSQATESSTTTAGSSSSLATLRPVQIKQTPAAQTVRHALPAALTALYLLRFDALVTNPVPVMLNALPVVAAFQMTYALLCLPAAGEPASKSNRKPRPGEKKKGGDIGSSTIITALLASVLTSIVTPFLYFAMVLFGAPFLTHGSHTFLCAAHLALLTLFPLFYVHGVDSAAWAAVGGFRAPLDETFGGLVGGIVGAWLGAVPIPLDWDREWQRWPVTILCGAYGGYLLGRVLGGTLFWGKKF.

Positions 21 to 31 (QSTSTTKSTPG) are enriched in polar residues. Residues 21–48 (QSTSTTKSTPGSQATESSTTTAGSSSSL) are disordered. Residues 32 to 48 (SQATESSTTTAGSSSSL) are compositionally biased toward low complexity. 5 consecutive transmembrane segments (helical) span residues 91 to 111 (VMLN…LLCL), 145 to 165 (LLAS…MVLF), 177 to 197 (FLCA…VHGV), 215 to 235 (TFGG…PIPL), and 248 to 268 (ILCG…TLFW).

It belongs to the PIGF family.

It localises to the endoplasmic reticulum membrane. The protein operates within glycolipid biosynthesis; glycosylphosphatidylinositol-anchor biosynthesis. In terms of biological role, acts in the GPI biosynthetic pathway between GlcNAc-PI synthesis and GPI transfer to protein. This Neurospora crassa (strain ATCC 24698 / 74-OR23-1A / CBS 708.71 / DSM 1257 / FGSC 987) protein is Glycosylphosphatidylinositol anchor biosynthesis protein 11 (gpi-11).